A 134-amino-acid polypeptide reads, in one-letter code: 16 kDa beta-galactoside-binding lectin (134 aa).

At M1 the chain carries N-acetylmethionine. The 131-residue stretch at 4 to 134 folds into the Galectin domain; it reads GLVVTQLDVQ…DFKVKAIKFS (131 aa). A beta-D-galactoside is bound at residue 69–75; it reads WGEEDRK.

Homodimer. As to expression, mainly in the liver (adult), mainly in the muscle (embryo).

This protein binds beta-galactoside. Its physiological function is not yet known. It may be involved in the regulation of differentiation. In Gallus gallus (Chicken), this protein is 16 kDa beta-galactoside-binding lectin.